Reading from the N-terminus, the 547-residue chain is Chaperonin GroEL (547 aa).

Residues Thr-30 to Pro-33, Lys-51, Asp-87 to Thr-91, Gly-415, and Asp-496 contribute to the ATP site.

The protein belongs to the chaperonin (HSP60) family. As to quaternary structure, forms a cylinder of 14 subunits composed of two heptameric rings stacked back-to-back. Interacts with the co-chaperonin GroES.

It localises to the cytoplasm. The enzyme catalyses ATP + H2O + a folded polypeptide = ADP + phosphate + an unfolded polypeptide.. Functionally, together with its co-chaperonin GroES, plays an essential role in assisting protein folding. The GroEL-GroES system forms a nano-cage that allows encapsulation of the non-native substrate proteins and provides a physical environment optimized to promote and accelerate protein folding. This chain is Chaperonin GroEL, found in Chlorobium phaeobacteroides (strain DSM 266 / SMG 266 / 2430).